Here is a 394-residue protein sequence, read N- to C-terminus: Serine palmitoyltransferase (394 aa).

Residues 111 to 112, Ser183, His211, and Thr239 contribute to the pyridoxal 5'-phosphate site; that span reads GF. Lys242 carries the N6-(pyridoxal phosphate)lysine modification.

Belongs to the class-II pyridoxal-phosphate-dependent aminotransferase family. It depends on pyridoxal 5'-phosphate as a cofactor.

The enzyme catalyses L-serine + hexadecanoyl-CoA + H(+) = 3-oxosphinganine + CO2 + CoA. It participates in lipid metabolism; sphingolipid metabolism. In terms of biological role, involved in de novo bacterial ceramide synthesis. Catalyzes the condensation of L-serine with palmitoyl-CoA (hexadecanoyl-CoA) to produce 3-oxosphinganine. Also capable of using alanine as substrate leading to the formation of 1-deoxysphinganine (1-deoxySa). Contributes to the levels of endogenous sphingolipids in its host. This is Serine palmitoyltransferase from Bacteroides ovatus (strain ATCC 8483 / DSM 1896 / JCM 5824 / BCRC 10623 / CCUG 4943 / NCTC 11153).